A 226-amino-acid chain; its full sequence is ATP-dependent dethiobiotin synthetase BioD (226 aa).

12–17 (GIGKTV) provides a ligand contact to ATP. Thr16 lines the Mg(2+) pocket. The active site involves Lys37. A substrate-binding site is contributed by Thr41. Residues Asp49, 108–111 (EGAG), 169–170 (GS), and 197–199 (PAG) each bind ATP. Mg(2+) contacts are provided by Asp49 and Glu108.

This sequence belongs to the dethiobiotin synthetase family. Homodimer. Mg(2+) serves as cofactor.

The protein localises to the cytoplasm. It carries out the reaction (7R,8S)-7,8-diammoniononanoate + CO2 + ATP = (4R,5S)-dethiobiotin + ADP + phosphate + 3 H(+). Its pathway is cofactor biosynthesis; biotin biosynthesis; biotin from 7,8-diaminononanoate: step 1/2. Functionally, catalyzes a mechanistically unusual reaction, the ATP-dependent insertion of CO2 between the N7 and N8 nitrogen atoms of 7,8-diaminopelargonic acid (DAPA, also called 7,8-diammoniononanoate) to form a ureido ring. The protein is ATP-dependent dethiobiotin synthetase BioD of Mycolicibacterium gilvum (strain PYR-GCK) (Mycobacterium gilvum (strain PYR-GCK)).